Consider the following 897-residue polypeptide: Schlafen family member 13 (897 aa).

The segment at 2 to 355 (EANHCSLGVY…WVEKMMDADP (354 aa)) is n'-domain region. Catalysis depends on residues Glu-208 and Glu-213. Residues His-284, Cys-286, and Cys-321 each coordinate Zn(2+). 599–606 (GLPGSGKT) contributes to the ATP binding site.

This sequence belongs to the Schlafen family. Subgroup III subfamily. Requires Mg(2+) as cofactor.

Its subcellular location is the cytoplasm. Functionally, endoribonuclease that cleaves tRNAs and rRNAs. Cleaves tRNAs 11 nucleotides from the 3'-terminus at the acceptor stem. Does not act on tRNA(Sec). Able to restrict HIV-1 virus replication; ability to inhibit HIV-1 replication is dependent on endoribonuclease activity. This Homo sapiens (Human) protein is Schlafen family member 13.